A 275-amino-acid polypeptide reads, in one-letter code: Exosome complex component RRP40 (275 aa).

Ala-2 is modified (N-acetylalanine). Residue Lys-151 forms a Glycyl lysine isopeptide (Lys-Gly) (interchain with G-Cter in SUMO2) linkage.

The protein belongs to the RRP40 family. Component of the RNA exosome core complex (Exo-9), composed of EXOSC1, EXOSC2, EXOSC3, EXOSC4, EXOSC5, EXOSC6, EXOSC7, EXOSC8 and EXOSC9; within the complex interacts with EXOSC5 and EXOSC9. The catalytically inactive RNA exosome core complex (Exo-9) associates with the catalytic subunit EXOSC10/RRP6. Exo-9 may associate with DIS3 to form the nucleolar exosome complex, or DIS3L to form the cytoplasmic exosome complex. Exo-9 is formed by a hexameric base ring consisting of the heterodimers EXOSC4-EXOSC9, EXOSC5-EXOSC8 and EXOSC6-EXOSC7, and a cap ring consisting of EXOSC1, EXOSC2 and EXOSC3. The RNA exosome complex associates with cofactors C1D/RRP47, MPHOSPH6/MPP6 and MTREX/MTR4. Interacts with MPHOSPH6/MPP6; the interaction is direct. Interacts with GTPBP1. Interacts with ZC3HAV1. Interacts with DDX17 only in the presence of ZC3HAV1 in an RNA-independent manner. Interacts with DHX36; this interaction occurs in a RNase-insensitive manner. Interacts with HBS1L isoform 2.

It is found in the cytoplasm. It localises to the nucleus. The protein resides in the nucleolus. Functionally, non-catalytic component of the RNA exosome complex which has 3'-&gt;5' exoribonuclease activity and participates in a multitude of cellular RNA processing and degradation events. In the nucleus, the RNA exosome complex is involved in proper maturation of stable RNA species such as rRNA, snRNA and snoRNA, in the elimination of RNA processing by-products and non-coding 'pervasive' transcripts, such as antisense RNA species and promoter-upstream transcripts (PROMPTs), and of mRNAs with processing defects, thereby limiting or excluding their export to the cytoplasm. The RNA exosome may be involved in Ig class switch recombination (CSR) and/or Ig variable region somatic hypermutation (SHM) by targeting AICDA deamination activity to transcribed dsDNA substrates. In the cytoplasm, the RNA exosome complex is involved in general mRNA turnover and specifically degrades inherently unstable mRNAs containing AU-rich elements (AREs) within their 3' untranslated regions, and in RNA surveillance pathways, preventing translation of aberrant mRNAs. It seems to be involved in degradation of histone mRNA. The catalytic inactive RNA exosome core complex of 9 subunits (Exo-9) is proposed to play a pivotal role in the binding and presentation of RNA for ribonucleolysis, and to serve as a scaffold for the association with catalytic subunits and accessory proteins or complexes. EXOSC3 as peripheral part of the Exo-9 complex stabilizes the hexameric ring of RNase PH-domain subunits through contacts with EXOSC9 and EXOSC5. This is Exosome complex component RRP40 (EXOSC3) from Bos taurus (Bovine).